A 568-amino-acid polypeptide reads, in one-letter code: Kelch-like protein 12 (568 aa).

One can recognise a BTB domain in the interval 33-100 (CDVTLRVEQK…VYTETVHVTV (68 aa)). The BACK domain occupies 135–236 (CLGIRDFAET…LTPRYITDVI (102 aa)). Kelch repeat units follow at residues 282 to 329 (VLLV…SLHD), 331 to 379 (IYVI…TLGD), 380 to 426 (MIYV…VASG), 427 to 473 (VIYC…LLND), 475 to 520 (IYVV…VLRG), and 522 to 567 (LYAI…VLRE). Positions 405 to 568 (QWSMLGDMQT…DAGVCVLREK (164 aa)) are interaction with DVL3.

As to quaternary structure, component of the BCR(KLHL12) E3 ubiquitin ligase complex, at least composed of CUL3 and KLHL12 and RBX1. This complex interacts with DVL3 upon activation of the Wnt signaling pathway by WNT3A. Interacts with DRD4, KLHL2 and SEC31A. Interacts with PEF1 and PDCD6/ALG-2; interaction takes place in response to cytosolic calcium increase and leads to bridge together the BCR(KLHL12) complex and SEC31 (SEC31A or SEC31B). Ubiquitinated by the SCF(FBXL17) complex, leading to its degradation by the proteasome: ubiquitination by the SCF(FBXL17) complex takes place when aberrant BTB domain dimers are formed. As to expression, ubiquitously expressed. Highly expressed in testis and at lower levels in the submandibular salivary gland.

It localises to the cytoplasmic vesicle. The protein localises to the COPII-coated vesicle. It participates in protein modification; protein ubiquitination. Functionally, substrate-specific adapter of a BCR (BTB-CUL3-RBX1) E3 ubiquitin ligase complex that acts as a negative regulator of Wnt signaling pathway and ER-Golgi transport. The BCR(KLHL12) complex is involved in ER-Golgi transport by regulating the size of COPII coats, thereby playing a key role in collagen export, which is required for embryonic stem (ES) cells division: BCR(KLHL12) acts by mediating monoubiquitination of SEC31 (SEC31A or SEC31B). The BCR(KLHL12) complex is also involved in neural crest specification: in response to cytosolic calcium increase, interacts with the heterodimer formed with PEF1 and PDCD6/ALG-2, leading to bridge together the BCR(KLHL12) complex and SEC31 (SEC31A or SEC31B), promoting monoubiquitination of SEC31 and subsequent collagen export. As part of the BCR(KLHL12) complex, also acts as a negative regulator of the Wnt signaling pathway by mediating ubiquitination and subsequent proteolysis of DVL3. The BCR(KLHL12) complex also mediates polyubiquitination of DRD4 and PEF1, without leading to degradation of these proteins. This Homo sapiens (Human) protein is Kelch-like protein 12 (KLHL12).